Here is a 108-residue protein sequence, read N- to C-terminus: Peptidyl-prolyl cis-trans isomerase FKBP1B (108 aa).

Positions 20–108 (GQTCVVHYTG…IFDVELLNLE (89 aa)) constitute a PPIase FKBP-type domain.

Identified in a complex composed of RYR2, FKBP1B, PKA catalytic subunit, PRKAR2A, AKAP6, and the protein phosphatases PP2A and PP1. Interacts directly with RYR2.

It is found in the cytoplasm. The protein localises to the sarcoplasmic reticulum. It catalyses the reaction [protein]-peptidylproline (omega=180) = [protein]-peptidylproline (omega=0). With respect to regulation, inhibited by both FK506 and rapamycin. Functionally, has the potential to contribute to the immunosuppressive and toxic effects of FK506 and rapamycin. PPIases accelerate the folding of proteins. It catalyzes the cis-trans isomerization of proline imidic peptide bonds in oligopeptides. This is Peptidyl-prolyl cis-trans isomerase FKBP1B (FKBP1B) from Bos taurus (Bovine).